The following is a 372-amino-acid chain: Non-structural protein NS2 (372 aa).

Residues 259–326 form a disordered region; the sequence is NQIEKQHTTH…QESEPESPSF (68 aa). Residues 299–309 are compositionally biased toward low complexity; sequence TETTSTSSSHH.

This chain is Non-structural protein NS2 (NS), found in Aedes albopictus (Asian tiger mosquito).